We begin with the raw amino-acid sequence, 391 residues long: Nucleosome assembly protein 1-like 1 (391 aa).

Residues 1–10 (MADIDNKEQS) show a composition bias toward basic and acidic residues. A disordered region spans residues 1–32 (MADIDNKEQSELDQDLEDVEEVEEEETGEETK). Alanine 2 is modified (N-acetylalanine). At serine 10 the chain carries Phosphoserine. The segment covering 11 to 28 (ELDQDLEDVEEVEEEETG) has biased composition (acidic residues). 2 positions are modified to phosphothreonine: threonine 62 and threonine 64. Serine 69 bears the Phosphoserine mark. Residue lysine 116 is modified to N6-acetyllysine. The short motif at 125–150 (YEPTEEECEWKPDEEDEVSEELKEKA) is the NAP1L motif element. The span at 131-143 (ECEWKPDEEDEVS) shows a compositional bias: acidic residues. A disordered region spans residues 131-163 (ECEWKPDEEDEVSEELKEKAKIEDEKKDEEKED). The residue at position 143 (serine 143) is a Phosphoserine. The span at 144 to 163 (EELKEKAKIEDEKKDEEKED) shows a compositional bias: basic and acidic residues. The short motif at 273–279 (IKKKQKH) is the Nuclear localization signal element. Acidic residues predominate over residues 346 to 376 (AIEDDDDDYDEEGEEADEEGEEEGDEENDPD). Residues 346-391 (AIEDDDDDYDEEGEEADEEGEEEGDEENDPDYDPKKDQNPAECKQQ) form a disordered region. 5-glutamyl polyglycine is present on residues glutamate 359 and glutamate 360. The segment covering 377–391 (YDPKKDQNPAECKQQ) has biased composition (basic and acidic residues). Cysteine methyl ester is present on cysteine 388. Cysteine 388 is lipidated: S-farnesyl cysteine. The propeptide at 389-391 (KQQ) is removed in mature form.

Belongs to the nucleosome assembly protein (NAP) family. As to quaternary structure, homodimer. The dimer binds strongly and sequentially to single and double H2A-H2B heterodimers. Interacts with ERCC6; this interaction increases ERCC6 processivity. Interacts with RAD54. Interacts with SETD1A. Post-translationally, polyglycylated by TTLL10 on glutamate residues, resulting in polyglycine chains on the gamma-carboxyl group. Both polyglutamylation and polyglycylation modifications can coexist on the same protein on adjacent residues, and lowering polyglycylation levels increases polyglutamylation, and reciprocally. In terms of processing, polyglutamylated by TTLL4 on glutamate residues, resulting in polyglutamate chains on the gamma-carboxyl group. Both polyglutamylation and polyglycylation modifications can coexist on the same protein on adjacent residues, and lowering polyglycylation levels increases polyglutamylation, and reciprocally. In terms of tissue distribution, highly expressed in the brain (at protein level). High expression in cerebral cortex, not in cerebellar cortex.

It localises to the nucleus. The protein resides in the cytoplasm. The protein localises to the melanosome. Its function is as follows. Histone chaperone that plays a role in the nuclear import of H2A-H2B and nucleosome assembly. Also participates in several important DNA repair mechanisms: greatly enhances ERCC6-mediated chromatin remodeling which is essential for transcription-coupled nucleotide excision DNA repair. Also stimulates homologous recombination (HR) by RAD51 and RAD54 which is essential in mitotic DNA double strand break (DSB) repair. Plays a key role in the regulation of embryonic neurogenesis. Promotes the proliferation of neural progenitors and inhibits neuronal differentiation during cortical development. Regulates neurogenesis via the modulation of RASSF10; regulates RASSF10 expression by promoting SETD1A-mediated H3K4 methylation at the RASSF10 promoter. In Mus musculus (Mouse), this protein is Nucleosome assembly protein 1-like 1 (Nap1l1).